A 917-amino-acid polypeptide reads, in one-letter code: Probable dipeptidyl-aminopeptidase B (917 aa).

Positions 1–16 (MATEKGHGRDDEERVP) are enriched in basic and acidic residues. Residues 1–21 (MATEKGHGRDDEERVPLTRGS) are disordered. Residues 1-99 (MATEKGHGRD…KPMHKSVKIA (99 aa)) are Cytoplasmic-facing. The helical; Signal-anchor for type II membrane protein transmembrane segment at 100-120 (LWTLLFLSLGGWSLAFVLFIF) threads the bilayer. Residues 121-917 (RSHDTYETPI…RAATWAGLSI (797 aa)) lie on the Vacuolar side of the membrane. N-linked (GlcNAc...) asparagine glycosylation is found at Asn135, Asn351, and Asn574. The Charge relay system role is filled by Ser756. N-linked (GlcNAc...) asparagine glycosylation is present at Asn815. Active-site charge relay system residues include Asp833 and His866. N-linked (GlcNAc...) asparagine glycosylation occurs at Asn902.

The protein belongs to the peptidase S9B family.

The protein resides in the vacuole membrane. It carries out the reaction Release of an N-terminal dipeptide, Xaa-Yaa-|-Zaa-, from a polypeptide, preferentially when Yaa is Pro, provided Zaa is neither Pro nor hydroxyproline.. In terms of biological role, type IV dipeptidyl-peptidase which removes N-terminal dipeptides sequentially from polypeptides having unsubstituted N-termini provided that the penultimate residue is proline. In Ajellomyces capsulatus (strain H88) (Darling's disease fungus), this protein is Probable dipeptidyl-aminopeptidase B (DAPB).